A 144-amino-acid polypeptide reads, in one-letter code: Large ribosomal subunit protein uL16 (144 aa).

This sequence belongs to the universal ribosomal protein uL16 family. In terms of assembly, part of the 50S ribosomal subunit.

Its function is as follows. Binds 23S rRNA and is also seen to make contacts with the A and possibly P site tRNAs. This is Large ribosomal subunit protein uL16 from Clostridium botulinum (strain Alaska E43 / Type E3).